The primary structure comprises 57 residues: UPF0391 membrane protein RPB_2024 (57 aa).

2 helical membrane-spanning segments follow: residues 4–24 (WVVT…GGIA) and 30–50 (IAKV…VVGL).

The protein belongs to the UPF0391 family.

The protein resides in the cell membrane. This Rhodopseudomonas palustris (strain HaA2) protein is UPF0391 membrane protein RPB_2024.